Consider the following 92-residue polypeptide: YcgL domain-containing protein SO_2575 (92 aa).

Positions 1–85 (MLCAVYKSSR…PQVNLLAEHR (85 aa)) constitute a YcgL domain.

The protein is YcgL domain-containing protein SO_2575 of Shewanella oneidensis (strain ATCC 700550 / JCM 31522 / CIP 106686 / LMG 19005 / NCIMB 14063 / MR-1).